The primary structure comprises 136 residues: Small ribosomal subunit protein uS19 (136 aa).

The interval 114–136 (RSRVSHGSAGVGATRSSKFVPLK) is disordered.

Belongs to the universal ribosomal protein uS19 family.

In terms of biological role, protein S19 forms a complex with S13 that binds strongly to the 16S ribosomal RNA. This Methanosarcina barkeri (strain Fusaro / DSM 804) protein is Small ribosomal subunit protein uS19.